Here is a 209-residue protein sequence, read N- to C-terminus: Ribosomal RNA large subunit methyltransferase E (209 aa).

5 residues coordinate S-adenosyl-L-methionine: G63, W65, D83, D99, and D124. The Proton acceptor role is filled by K164.

This sequence belongs to the class I-like SAM-binding methyltransferase superfamily. RNA methyltransferase RlmE family.

It is found in the cytoplasm. It carries out the reaction uridine(2552) in 23S rRNA + S-adenosyl-L-methionine = 2'-O-methyluridine(2552) in 23S rRNA + S-adenosyl-L-homocysteine + H(+). Specifically methylates the uridine in position 2552 of 23S rRNA at the 2'-O position of the ribose in the fully assembled 50S ribosomal subunit. In Sodalis glossinidius (strain morsitans), this protein is Ribosomal RNA large subunit methyltransferase E.